A 152-amino-acid polypeptide reads, in one-letter code: Lipoprotein signal peptidase (152 aa).

Helical transmembrane passes span 55–75 (NKMWFFYIITVVFVGFIVFYM) and 85–105 (LGISLGLILGGAIGNFIDRVF). Residues Asp111 and Asp129 contribute to the active site. Residues 124-144 (VFNIADSALCIGVVLIIIQTL) form a helical membrane-spanning segment.

The protein belongs to the peptidase A8 family.

It localises to the cell membrane. It catalyses the reaction Release of signal peptides from bacterial membrane prolipoproteins. Hydrolyzes -Xaa-Yaa-Zaa-|-(S,diacylglyceryl)Cys-, in which Xaa is hydrophobic (preferably Leu), and Yaa (Ala or Ser) and Zaa (Gly or Ala) have small, neutral side chains.. It functions in the pathway protein modification; lipoprotein biosynthesis (signal peptide cleavage). In terms of biological role, this protein specifically catalyzes the removal of signal peptides from prolipoproteins. This chain is Lipoprotein signal peptidase, found in Bacillus cytotoxicus (strain DSM 22905 / CIP 110041 / 391-98 / NVH 391-98).